Reading from the N-terminus, the 268-residue chain is Tryptophan synthase alpha chain (268 aa).

Active-site proton acceptor residues include Glu-49 and Asp-60.

Belongs to the TrpA family. Tetramer of two alpha and two beta chains.

It carries out the reaction (1S,2R)-1-C-(indol-3-yl)glycerol 3-phosphate + L-serine = D-glyceraldehyde 3-phosphate + L-tryptophan + H2O. It functions in the pathway amino-acid biosynthesis; L-tryptophan biosynthesis; L-tryptophan from chorismate: step 5/5. The alpha subunit is responsible for the aldol cleavage of indoleglycerol phosphate to indole and glyceraldehyde 3-phosphate. The sequence is that of Tryptophan synthase alpha chain from Haemophilus influenzae (strain PittEE).